The following is a 152-amino-acid chain: UPF0266 membrane protein YobD (152 aa).

The next 3 membrane-spanning stretches (helical) occupy residues 6 to 26, 45 to 65, and 67 to 87; these read LVLILFIAALLAYALYDQFIM, VDSVIFVGLVAILIYNNVTSH, and AQMTTWLLSALALMGFYIFWI.

This sequence belongs to the UPF0266 family.

It is found in the cell inner membrane. The protein is UPF0266 membrane protein YobD of Salmonella enteritidis PT4 (strain P125109).